We begin with the raw amino-acid sequence, 130 residues long: Small ribosomal subunit protein uS4 (130 aa).

The residue at position 64 (Lys64) is an N6-acetyllysine. Residue Lys91 forms a Glycyl lysine isopeptide (Lys-Gly) (interchain with G-Cter in SUMO2) linkage. The S4 RNA-binding domain occupies 106–130 (RRLQTQVFKLGLAXSIHHXRVLIRQ). Residue Lys114 is modified to N6-acetyllysine.

It belongs to the universal ribosomal protein uS4 family. Component of the small ribosomal subunit. Identified in a IGF2BP1-dependent mRNP granule complex containing untranslated mRNAs. Part of the small subunit (SSU) processome, composed of more than 70 proteins and the RNA chaperone small nucleolar RNA (snoRNA) U3.

Its subcellular location is the cytoplasm. The protein resides in the nucleus. It is found in the nucleolus. Component of the small ribosomal subunit. The ribosome is a large ribonucleoprotein complex responsible for the synthesis of proteins in the cell. Part of the small subunit (SSU) processome, first precursor of the small eukaryotic ribosomal subunit. During the assembly of the SSU processome in the nucleolus, many ribosome biogenesis factors, an RNA chaperone and ribosomal proteins associate with the nascent pre-rRNA and work in concert to generate RNA folding, modifications, rearrangements and cleavage as well as targeted degradation of pre-ribosomal RNA by the RNA exosome. The sequence is that of Small ribosomal subunit protein uS4 (RPS9) from Sus scrofa (Pig).